We begin with the raw amino-acid sequence, 131 residues long: Protein Turandot M (131 aa).

The N-terminal stretch at 1–23 (MNPTVYLSCLVVFSLFYLGKAQA) is a signal peptide.

This sequence belongs to the Turandot family.

It is found in the secreted. Its function is as follows. A humoral factor that may play a role in stress tolerance. Requires Mekk1 expression in the fat body to regulate response to septic injury and consequent immune response. This chain is Protein Turandot M, found in Drosophila yakuba (Fruit fly).